Here is a 165-residue protein sequence, read N- to C-terminus: Choriogonadotropin subunit beta 7 (165 aa).

The first 20 residues, 1-20 (MEMFQGLLLLLLLSMGGTWA), serve as a signal peptide directing secretion. 6 disulfide bridges follow: cysteine 29-cysteine 77, cysteine 43-cysteine 92, cysteine 46-cysteine 130, cysteine 54-cysteine 108, cysteine 58-cysteine 110, and cysteine 113-cysteine 120. 2 N-linked (GlcNAc...) asparagine glycosylation sites follow: asparagine 33 and asparagine 50. Residues 131–165 (DDPRFQASSSSKAPPPSLPSPSRLPGPSDTPILPQ) are disordered. 4 O-linked (GalNAc...) serine glycosylation sites follow: serine 141, serine 147, serine 152, and serine 158. Residues 143-154 (APPPSLPSPSRL) are compositionally biased toward pro residues.

This sequence belongs to the glycoprotein hormones subunit beta family. In terms of assembly, heterodimer of a common alpha chain identical in LH, FSH, TSH and HCG and a unique beta chain distinct in each of the hormones and confers receptor and biological specificity. High expression in the placenta throughout pregnancy.

The protein resides in the secreted. Beta subunit of the human chorionic gonadotropin (hCG). hCG is a complex glycoprotein composed of two glycosylated subunits alpha and beta which are non-covalently associated. The alpha subunit is identical to those in the pituitary gonadotropin hormones (LH, FSH and TSH). The beta subunits are distinct in each of the hormones and confer receptor and biological specificity. Has an essential role for pregnancy and maternal adaptation. Stimulates the ovaries to synthesize the steroids that are essential for the maintenance of pregnancy. In Homo sapiens (Human), this protein is Choriogonadotropin subunit beta 7.